Consider the following 108-residue polypeptide: UPF0235 protein RPB_0109 (108 aa).

It belongs to the UPF0235 family.

This Rhodopseudomonas palustris (strain HaA2) protein is UPF0235 protein RPB_0109.